The following is a 177-amino-acid chain: Adenine phosphoribosyltransferase (177 aa).

This sequence belongs to the purine/pyrimidine phosphoribosyltransferase family. Homodimer.

The protein resides in the cytoplasm. It catalyses the reaction AMP + diphosphate = 5-phospho-alpha-D-ribose 1-diphosphate + adenine. The protein operates within purine metabolism; AMP biosynthesis via salvage pathway; AMP from adenine: step 1/1. Catalyzes a salvage reaction resulting in the formation of AMP, that is energically less costly than de novo synthesis. In Chlorobium limicola (strain DSM 245 / NBRC 103803 / 6330), this protein is Adenine phosphoribosyltransferase.